Here is a 1316-residue protein sequence, read N- to C-terminus: DNA-directed RNA polymerase subunit beta' (1316 aa).

Zn(2+)-binding residues include Cys-60, Cys-62, Cys-75, and Cys-78. The Mg(2+) site is built by Asp-535, Asp-537, and Asp-539. The Zn(2+) site is built by Cys-891, Cys-968, Cys-975, and Cys-978.

It belongs to the RNA polymerase beta' chain family. As to quaternary structure, the RNAP catalytic core consists of 2 alpha, 1 beta, 1 beta' and 1 omega subunit. When a sigma factor is associated with the core the holoenzyme is formed, which can initiate transcription. The cofactor is Mg(2+). Zn(2+) is required as a cofactor.

It catalyses the reaction RNA(n) + a ribonucleoside 5'-triphosphate = RNA(n+1) + diphosphate. Functionally, DNA-dependent RNA polymerase catalyzes the transcription of DNA into RNA using the four ribonucleoside triphosphates as substrates. The sequence is that of DNA-directed RNA polymerase subunit beta' from Mycobacterium bovis (strain BCG / Tokyo 172 / ATCC 35737 / TMC 1019).